Here is a 153-residue protein sequence, read N- to C-terminus: Transcriptional repressor NrdR (153 aa).

A zinc finger lies at 3 to 34 (CPFCGYEDSKVVDTRPTNEGKTIKRRRECLKC). The region spanning 49–139 (ILVIKKDNRR…VYRQFKDINT (91 aa)) is the ATP-cone domain.

The protein belongs to the NrdR family. Zn(2+) is required as a cofactor.

Functionally, negatively regulates transcription of bacterial ribonucleotide reductase nrd genes and operons by binding to NrdR-boxes. The protein is Transcriptional repressor NrdR of Caldicellulosiruptor bescii (strain ATCC BAA-1888 / DSM 6725 / KCTC 15123 / Z-1320) (Anaerocellum thermophilum).